The chain runs to 792 residues: Phenylalanine--tRNA ligase beta subunit (792 aa).

A tRNA-binding domain is found at 39–150 (APAFHKVVVA…PDAPVGTDFR (112 aa)). One can recognise a B5 domain in the interval 405 to 480 (PARDPIRLGL…RMYGYNRIAA (76 aa)). Positions 458, 464, 467, and 468 each coordinate Mg(2+). Residues 698–791 (SKYPPIRRDI…LENRFGARLR (94 aa)) form the FDX-ACB domain.

Belongs to the phenylalanyl-tRNA synthetase beta subunit family. Type 1 subfamily. In terms of assembly, tetramer of two alpha and two beta subunits. Mg(2+) is required as a cofactor.

It is found in the cytoplasm. The catalysed reaction is tRNA(Phe) + L-phenylalanine + ATP = L-phenylalanyl-tRNA(Phe) + AMP + diphosphate + H(+). This is Phenylalanine--tRNA ligase beta subunit from Nitrosospira multiformis (strain ATCC 25196 / NCIMB 11849 / C 71).